We begin with the raw amino-acid sequence, 231 residues long: NADH-ubiquinone oxidoreductase chain 4 (231 aa).

Helical transmembrane passes span 1-21 (PIAGSMVLAAILLKLGGYGII), 34-54 (LFLPFIVLALWGAILANLTCL), 63-85 (IAYSSISHMGLVVAAIIIQTPWG), 89-111 (AMALMIAHGFTSSALFCLANMTY), 124-146 (GLHNTLPMATTWWLMTNLMNIAI), and 169-189 (TIIILGLSMLITASYSLHMFL).

This sequence belongs to the complex I subunit 4 family.

The protein localises to the mitochondrion membrane. The catalysed reaction is a ubiquinone + NADH + 5 H(+)(in) = a ubiquinol + NAD(+) + 4 H(+)(out). Its function is as follows. Core subunit of the mitochondrial membrane respiratory chain NADH dehydrogenase (Complex I) that is believed to belong to the minimal assembly required for catalysis. Complex I functions in the transfer of electrons from NADH to the respiratory chain. The immediate electron acceptor for the enzyme is believed to be ubiquinone. The chain is NADH-ubiquinone oxidoreductase chain 4 (MT-ND4) from Crotalus lepidus (Banded rock rattlesnake).